The primary structure comprises 1007 residues: Serine/threonine-protein kinase PRP4 homolog (1007 aa).

The disordered stretch occupies residues 1-102 (MAATEPPSLR…LSPAKRTKLD (102 aa)). Ala2 bears the N-acetylalanine mark. Ser8, Ser21, Ser24, and Ser33 each carry phosphoserine. 2 stretches are compositionally biased toward basic residues: residues 40 to 60 (KHSR…KHKH) and 68 to 82 (KKHK…HKRK). Basic and acidic residues predominate over residues 83 to 92 (EVIEASDKEG). Phosphoserine occurs at positions 88 and 94. Lys100 carries the post-translational modification N6-acetyllysine; alternate. Lys100 participates in a covalent cross-link: Glycyl lysine isopeptide (Lys-Gly) (interchain with G-Cter in SUMO2); alternate. Residue Lys112 forms a Glycyl lysine isopeptide (Lys-Gly) (interchain with G-Cter in SUMO2) linkage. A Glycyl lysine isopeptide (Lys-Gly) (interchain with G-Cter in SUMO2); alternate cross-link involves residue Lys118. Lys118 is covalently cross-linked (Glycyl lysine isopeptide (Lys-Gly) (interchain with G-Cter in SUMO1); alternate). Phosphoserine is present on Ser132. The residue at position 141 (Tyr141) is a Phosphotyrosine. Disordered regions lie at residues 141–535 (YESG…EDEE) and 560–583 (NISV…SPDD). A phosphoserine mark is found at Ser143, Ser145, and Ser167. Residues 158–169 (GNRSSTRSSSTR) show a composition bias toward low complexity. Glycyl lysine isopeptide (Lys-Gly) (interchain with G-Cter in SUMO2) cross-links involve residues Lys171 and Lys178. 2 stretches are compositionally biased toward basic residues: residues 180–203 (SAKK…RKSK) and 215–231 (RSKS…SKRS). Residues Ser240, Ser242, Ser258, Ser278, Ser292, and Ser294 each carry the phosphoserine modification. Positions 248–271 (RSQEKVGKARSPAEEKMKSEEKGK) are enriched in basic and acidic residues. Over residues 294–303 (SPVDLRDKSK) the composition is skewed to basic and acidic residues. A compositionally biased stretch (basic residues) spans 304 to 315 (DRRSRSKERKSK). Residues 316–325 (RSEIDKEKKP) show a composition bias toward basic and acidic residues. Phosphoserine is present on residues Ser328, Ser354, Ser356, Ser366, and Ser368. Basic residues predominate over residues 342 to 367 (PSRRPGRSPKRRSLSPKLRDKSRRSR). Thr385 is subject to Phosphothreonine. Ser387 bears the Phosphoserine mark. Composition is skewed to basic and acidic residues over residues 395 to 408 (RSLE…ERRR) and 415 to 429 (RPRD…RSKD). 3 positions are modified to phosphoserine: Ser427, Ser431, and Ser437. The segment covering 438-497 (PTRRRSRSPIRRRSRSPLRRSRSPRRRSRSPRRRDRSRRSRSRLRRRSRSRGGHRRRSRS) has biased composition (basic residues). Phosphoserine is present on residues Ser518, Ser519, Ser520, Ser565, Ser569, Ser576, Ser578, and Ser580. Residues 518–535 (SSSDDNLEDFDVEEEDEE) show a composition bias toward acidic residues. Low complexity predominate over residues 562-581 (SVPSEPSSPQSSTRSRSPSP). Glycyl lysine isopeptide (Lys-Gly) (interchain with G-Cter in SUMO2) cross-links involve residues Lys593 and Lys659. Residues 687–1006 (YNVYGYTGQG…ALQHAFIQEK (320 aa)) form the Protein kinase domain. ATP-binding positions include 693–701 (TGQGVFSNV) and Lys717. Lys717 is subject to N6-acetyllysine. The Proton acceptor role is filled by Asp815. The residue at position 849 (Tyr849) is a Phosphotyrosine. Phosphoserine is present on Ser852.

Belongs to the protein kinase superfamily. CMGC Ser/Thr protein kinase family. In terms of assembly, interacts with CLK1 C-terminus. Associates with the U5 snRNP and NCOR1 deacetylase complexes. Identified in the spliceosome C complex. In terms of processing, phosphorylated by CLK1. Autophosphorylated; phosphorylation inhibits interaction with its targets, such as PRPF6 or SMARCA4.

The protein localises to the nucleus. The protein resides in the chromosome. It is found in the centromere. It localises to the kinetochore. It carries out the reaction L-seryl-[protein] + ATP = O-phospho-L-seryl-[protein] + ADP + H(+). The enzyme catalyses L-threonyl-[protein] + ATP = O-phospho-L-threonyl-[protein] + ADP + H(+). Serine/threonine kinase involved in spliceosomal assembly as well as mitosis and signaling regulation. Connects chromatin mediated regulation of transcription and pre-mRNA splicing. During spliceosomal assembly, interacts with and phosphorylates PRPF6 and PRPF31, components of the U4/U6-U5 tri-small nuclear ribonucleoprotein (snRNP), to facilitate the formation of the spliceosome B complex. Plays a role in regulating transcription and the spindle assembly checkpoint (SAC). Associates with U5 snRNP and NCOR1 deacetylase complexes which may allow a coordination of pre-mRNA splicing with chromatin remodeling events involved in transcriptional regulation. Associates and probably phosphorylates SMARCA4 and NCOR1. Phosphorylates SRSF1. Associates with kinetochores during mitosis and is necessary for recruitment and maintenance of the checkpoint proteins such as MAD1L1 and MAD12L1 at the kinetochores. Phosphorylates and regulates the activity of the transcription factors such as ELK1 and KLF13. Phosphorylates nuclear YAP1 and WWTR1/TAZ which induces nuclear exclusion and regulates Hippo signaling pathway, involved in tissue growth control. This Mus musculus (Mouse) protein is Serine/threonine-protein kinase PRP4 homolog (Prp4k).